The sequence spans 266 residues: MSKSQPHKARKRFGQNFLHDHGVIRRIVACIGPKKGQRIVEIGPGKGALTEGIISVTERMDVVELDRDLIPILKVNLFRFPELTVHEADAMKFDFTSLTTPEQAIRVVGNLPYNISTPLIFHLLSQAQAIEDMHFMLQKEVVDRLAARPGDSLYGRLSVMAQYYCAVESLFIVGPESFDPAPKVDSAIVRMTPHKILPHPVNNIKMLEDMVRIGFQQRRKTLRNNYKGVLDNDDFSALNIDPTLRPERLDVEDFVRIANYVIKKEG.

S-adenosyl-L-methionine contacts are provided by Asn16, Leu18, Gly43, Glu64, Asp89, and Asn110.

Belongs to the class I-like SAM-binding methyltransferase superfamily. rRNA adenine N(6)-methyltransferase family. RsmA subfamily.

It localises to the cytoplasm. It catalyses the reaction adenosine(1518)/adenosine(1519) in 16S rRNA + 4 S-adenosyl-L-methionine = N(6)-dimethyladenosine(1518)/N(6)-dimethyladenosine(1519) in 16S rRNA + 4 S-adenosyl-L-homocysteine + 4 H(+). Functionally, specifically dimethylates two adjacent adenosines (A1518 and A1519) in the loop of a conserved hairpin near the 3'-end of 16S rRNA in the 30S particle. May play a critical role in biogenesis of 30S subunits. This Marinomonas sp. (strain MWYL1) protein is Ribosomal RNA small subunit methyltransferase A.